The chain runs to 484 residues: Glycogen synthase (484 aa).

Lys18 contacts ADP-alpha-D-glucose.

The protein belongs to the glycosyltransferase 1 family. Bacterial/plant glycogen synthase subfamily.

The enzyme catalyses [(1-&gt;4)-alpha-D-glucosyl](n) + ADP-alpha-D-glucose = [(1-&gt;4)-alpha-D-glucosyl](n+1) + ADP + H(+). The protein operates within glycan biosynthesis; glycogen biosynthesis. Functionally, synthesizes alpha-1,4-glucan chains using ADP-glucose. The sequence is that of Glycogen synthase from Vibrio cholerae serotype O1 (strain ATCC 39541 / Classical Ogawa 395 / O395).